The sequence spans 228 residues: E3 ubiquitin-protein ligase RNF114 (228 aa).

The RING-type zinc-finger motif lies at 29-68; that stretch reads CPVCLEVYEKPVQVPCGHVFCSACLQECLKPKKPVCGVCR. 2 residues coordinate Zn(2+): C91 and C94. The C2HC RNF-type zinc-finger motif lies at 91-110; that stretch reads CHGCRKNFFLSKIRSHVATC. At K102 the chain carries N6-acetyllysine. 2 residues coordinate Zn(2+): H106 and C110. K112 bears the N6-acetyllysine mark.

As to quaternary structure, interacts with XAF1, the interaction increases XAF1 stability and proapoptotic effects, and may regulate IFN signaling. In terms of processing, autoubiquitinated. Polyubiquitinated in the presence of E2 enzymes UBE2D1, UBE2D2 and UBE2D3, but only monoubiquitinated in the presence of UBE2E1. Expressed in numerous tissues, including skin, CD4 lymphocytes and dendritic cells. Highest levels in testis.

It localises to the cytoplasm. The protein localises to the nucleus. It carries out the reaction S-ubiquitinyl-[E2 ubiquitin-conjugating enzyme]-L-cysteine + [acceptor protein]-L-lysine = [E2 ubiquitin-conjugating enzyme]-L-cysteine + N(6)-ubiquitinyl-[acceptor protein]-L-lysine.. The protein operates within protein modification; protein ubiquitination. In terms of biological role, E3 ubiquitin-protein ligase that promotes the ubiquitination of various substrates. In turn, participates in the regulation of many biological processes including cell cycle, apoptosis, osteoclastogenesis as well as innate or adaptive immunity. Acts as a negative regulator of NF-kappa-B-dependent transcription by promoting the ubiquitination and stabilization of the NF-kappa-B inhibitor TNFAIP3. May promote the ubiquitination of TRAF6 as well. Also acts as a negative regulator of T-cell activation. Inhibits cellular dsRNA responses and interferon production by targeting MAVS component for proteasomal degradation. Ubiquitinates the CDK inhibitor CDKN1A leading to its degradationand probably also CDKN1B and CDKN1C. This activity stimulates cell cycle G1-to-S phase transition and suppresses cellular senescence. May play a role in spermatogenesis. This chain is E3 ubiquitin-protein ligase RNF114 (RNF114), found in Homo sapiens (Human).